Here is a 329-residue protein sequence, read N- to C-terminus: Quinone oxidoreductase (329 aa).

Residue Ala-2 is modified to N-acetylalanine. N6-acetyllysine is present on Lys-23. NADP(+) contacts are provided by residues Tyr-53, 158–161 (SGGV), Gly-181, His-200, Asn-229, 246–249 (VGSR), and 269–271 (VTL). Ser-248 carries the post-translational modification Phosphoserine. Lys-296 carries the post-translational modification N6-succinyllysine.

This sequence belongs to the zinc-containing alcohol dehydrogenase family. Quinone oxidoreductase subfamily. As to quaternary structure, homotetramer. As to expression, only very low amounts in the lens.

The protein localises to the cytoplasm. It carries out the reaction 2 a quinone + NADPH + H(+) = 2 a 1,4-benzosemiquinone + NADP(+). In terms of biological role, does not have alcohol dehydrogenase activity. Binds NADP and acts through a one-electron transfer process. Orthoquinones, such as 1,2-naphthoquinone or 9,10-phenanthrenequinone, are the best substrates (in vitro). May act in the detoxification of xenobiotics. Interacts with (AU)-rich elements (ARE) in the 3'-UTR of target mRNA species. Enhances the stability of mRNA coding for BCL2. NADPH binding interferes with mRNA binding. The protein is Quinone oxidoreductase (CRYZ) of Homo sapiens (Human).